The sequence spans 376 residues: Cyclin-D3-1 (376 aa).

The segment at 298–376 (KRKSHDSSSS…HLPWAIVATP (79 aa)) is disordered. The segment covering 321-349 (NSDESSNDSWSASSCNPPTSSSSPQQQPP) has biased composition (low complexity). A compositionally biased stretch (basic and acidic residues) spans 354 to 363 (RGAEENEKKK).

This sequence belongs to the cyclin family. Cyclin D subfamily. As to quaternary structure, interacts with the C-terminal domain of CDKA-1. Interacts with KRP1/ICK1. Interacts with KRP6. Post-translationally, phosphorylated. In terms of tissue distribution, highly expressed in roots and at lower levels in leaves and flowers. Expressed in vegetative shoot meristem and inflorescence.

Involved in the control of the cell cycle at the G1/S (start) transition. Activates the G1/S phase transition in response to cytokinin hormone signal, but declines in response to sucrose starvation leading to G1 arrest. Involved in the induction of mitotic cell division. Plays an important role in the switch from cell proliferation to the final stages of differentiation during plant development. May not be involved in the activation of cell cycle in the root apical meristem (RAM) in the early phase of seed germination. Promotes divisions in the guard cells (GCs) after the guard mother cells (GMC) symmetric division. The chain is Cyclin-D3-1 (CYCD3-1) from Arabidopsis thaliana (Mouse-ear cress).